We begin with the raw amino-acid sequence, 202 residues long: Peroxynitrite isomerase (202 aa).

Positions 21–27 (GEWEGRG) match the GXWXGXG motif. His193 serves as a coordination point for heme b.

It belongs to the nitrobindin family. Homodimer. It depends on heme b as a cofactor.

It carries out the reaction peroxynitrite = nitrate. Its pathway is nitrogen metabolism. Heme-binding protein able to scavenge peroxynitrite and to protect free L-tyrosine against peroxynitrite-mediated nitration, by acting as a peroxynitrite isomerase that converts peroxynitrite to nitrate. Therefore, this protein likely plays a role in peroxynitrite sensing and in the detoxification of reactive nitrogen and oxygen species (RNS and ROS, respectively). Is able to bind nitric oxide (NO) in vitro, but may act as a sensor of peroxynitrite levels in vivo. The protein is Peroxynitrite isomerase of Pseudarthrobacter chlorophenolicus (strain ATCC 700700 / DSM 12829 / CIP 107037 / JCM 12360 / KCTC 9906 / NCIMB 13794 / A6) (Arthrobacter chlorophenolicus).